Here is a 361-residue protein sequence, read N- to C-terminus: Putative F-box protein At3g18340 (361 aa).

In terms of domain architecture, F-box spans 1–46 (MASGKLPWELEEEILCRLPPGSLVRLRSVCKHWNDLYNDKWFIKKS).

The protein is Putative F-box protein At3g18340 of Arabidopsis thaliana (Mouse-ear cress).